Consider the following 398-residue polypeptide: Arginine biosynthesis bifunctional protein ArgJ (398 aa).

The substrate site is built by T148, K174, T185, E271, N393, and T398. The active-site Nucleophile is T185.

It belongs to the ArgJ family. Heterotetramer of two alpha and two beta chains.

The protein resides in the cytoplasm. The catalysed reaction is N(2)-acetyl-L-ornithine + L-glutamate = N-acetyl-L-glutamate + L-ornithine. It catalyses the reaction L-glutamate + acetyl-CoA = N-acetyl-L-glutamate + CoA + H(+). It participates in amino-acid biosynthesis; L-arginine biosynthesis; L-ornithine and N-acetyl-L-glutamate from L-glutamate and N(2)-acetyl-L-ornithine (cyclic): step 1/1. It functions in the pathway amino-acid biosynthesis; L-arginine biosynthesis; N(2)-acetyl-L-ornithine from L-glutamate: step 1/4. Functionally, catalyzes two activities which are involved in the cyclic version of arginine biosynthesis: the synthesis of N-acetylglutamate from glutamate and acetyl-CoA as the acetyl donor, and of ornithine by transacetylation between N(2)-acetylornithine and glutamate. The polypeptide is Arginine biosynthesis bifunctional protein ArgJ (Listeria monocytogenes serovar 1/2a (strain ATCC BAA-679 / EGD-e)).